Consider the following 247-residue polypeptide: 2,3-bisphosphoglycerate-dependent phosphoglycerate mutase (247 aa).

Substrate contacts are provided by residues 8-15 (RHGESQWN), 21-22 (TG), R60, 87-90 (ERHY), K98, 114-115 (RR), and 183-184 (GN). H9 serves as the catalytic Tele-phosphohistidine intermediate. E87 functions as the Proton donor/acceptor in the catalytic mechanism.

This sequence belongs to the phosphoglycerate mutase family. BPG-dependent PGAM subfamily.

It catalyses the reaction (2R)-2-phosphoglycerate = (2R)-3-phosphoglycerate. It functions in the pathway carbohydrate degradation; glycolysis; pyruvate from D-glyceraldehyde 3-phosphate: step 3/5. Its function is as follows. Catalyzes the interconversion of 2-phosphoglycerate and 3-phosphoglycerate. The protein is 2,3-bisphosphoglycerate-dependent phosphoglycerate mutase of Chlorobium phaeovibrioides (strain DSM 265 / 1930) (Prosthecochloris vibrioformis (strain DSM 265)).